Here is a 361-residue protein sequence, read N- to C-terminus: Protein RecA (361 aa).

Position 77-84 (77-84 (GPESSGKT)) interacts with ATP.

It belongs to the RecA family.

The protein resides in the cytoplasm. Can catalyze the hydrolysis of ATP in the presence of single-stranded DNA, the ATP-dependent uptake of single-stranded DNA by duplex DNA, and the ATP-dependent hybridization of homologous single-stranded DNAs. It interacts with LexA causing its activation and leading to its autocatalytic cleavage. The chain is Protein RecA from Brucella suis (strain ATCC 23445 / NCTC 10510).